A 535-amino-acid polypeptide reads, in one-letter code: Arylsulfatase K (535 aa).

A signal peptide spans 1–22 (MLLLWLSVFAASALAAPDRGAG). Ca(2+) contacts are provided by D44 and C84. The active-site Nucleophile is the C84. The residue at position 84 (C84) is a 3-oxoalanine (Cys). Residue N112 is glycosylated (N-linked (GlcNAc...) asparagine). K132 is a binding site for substrate. An N-linked (GlcNAc...) asparagine glycan is attached at N197. H255 contacts substrate. N266 is a glycosylation site (N-linked (GlcNAc...) asparagine). Positions 317 and 318 each coordinate Ca(2+). Residues N379, N417, and N502 are each glycosylated (N-linked (GlcNAc...) asparagine).

This sequence belongs to the sulfatase family. Ca(2+) serves as cofactor. In terms of processing, the conversion to 3-oxoalanine (also known as C-formylglycine, FGly), of a serine or cysteine residue in prokaryotes and of a cysteine residue in eukaryotes, is critical for catalytic activity. The 75-kDa precursor undergoes proteolytic processing to yield a 23 kDa form. Post-translationally, N-glycosylated with both high mannose and complex type sugars.

The protein resides in the secreted. Its subcellular location is the lysosome. The enzyme catalyses an aryl sulfate + H2O = a phenol + sulfate + H(+). It carries out the reaction Hydrolysis of the 2-sulfate groups of the 2-O-sulfo-D-glucuronate residues of chondroitin sulfate, heparin and heparitin sulfate.. Functionally, catalyzes the hydrolysis of pseudosubstrates such as p-nitrocatechol sulfate and p-nitrophenyl sulfate. Catalyzes the hydrolysis of the 2-sulfate groups of the 2-O-sulfo-D-glucuronate residues of chondroitin sulfate, heparin and heparitin sulfate. Acts selectively on 2-sulfoglucuronate and lacks activity against 2-sulfoiduronate. In Canis lupus familiaris (Dog), this protein is Arylsulfatase K (ARSK).